Reading from the N-terminus, the 476-residue chain is Small ribosomal subunit protein mS29 (476 aa).

The transit peptide at 1 to 54 (MLPKFRSRSSIIKNTERISNILSGGKLTVCGSKLGGLYTFEKCTFNKYYSSSQY) directs the protein to the mitochondrion. Positions 58-97 (GRPVGGNIHSSSNQQRQKNSEAPRINEIPPSTSSVEKSTT) are disordered. 2 stretches are compositionally biased toward polar residues: residues 65 to 74 (IHSSSNQQRQ) and 86 to 97 (PPSTSSVEKSTT). 200-207 (GAPGSGRS) is a binding site for ATP.

It belongs to the mitochondrion-specific ribosomal protein mS29 family. Component of the mitochondrial small ribosomal subunit (mt-SSU). Mature yeast 74S mitochondrial ribosomes consist of a small (37S) and a large (54S) subunit. The 37S small subunit contains a 15S ribosomal RNA (15S mt-rRNA) and at least 32 different proteins. The 54S large subunit contains a 21S rRNA (21S mt-rRNA) and at least 45 different proteins.

It is found in the mitochondrion. Its function is as follows. Component of the mitochondrial ribosome (mitoribosome), a dedicated translation machinery responsible for the synthesis of mitochondrial genome-encoded proteins, including at least some of the essential transmembrane subunits of the mitochondrial respiratory chain. The mitoribosomes are attached to the mitochondrial inner membrane and translation products are cotranslationally integrated into the membrane. mS29 binds GTP and is probably an active GTPase. GTP hydrolysis may be linked to subunit association. mS29 also has an extraribosomal function, being required for maintenance of mitochondrial DNA. This is Small ribosomal subunit protein mS29 (rsm23) from Schizosaccharomyces pombe (strain 972 / ATCC 24843) (Fission yeast).